Here is a 67-residue protein sequence, read N- to C-terminus: uncharacterized protein (67 aa).

This is an uncharacterized protein from Enterobacteria phage T4 (Bacteriophage T4).